Consider the following 201-residue polypeptide: MYIGRFLVLGKTDEGNPFVTYRVSSRSFPNRVAKVMDDNTVAILPKDLEEMFKNPYITYNCVKLVGDVAIATNGSHTDIIADKIKLGLPIRDALSYSLLTMDYEKDDYNTPRIAVVLTKDSAYMGYVSENDVRIKKVELESGKAYYLSVYEACNITKHQVISVAGKTAEEVTKFVMDYEEFEKPVTAATVLLKDGFKLATL.

It belongs to the archaeal IMP cyclohydrolase family.

It catalyses the reaction IMP + H2O = 5-formamido-1-(5-phospho-D-ribosyl)imidazole-4-carboxamide. Its pathway is purine metabolism; IMP biosynthesis via de novo pathway; IMP from 5-formamido-1-(5-phospho-D-ribosyl)imidazole-4-carboxamide: step 1/1. Catalyzes the cyclization of 5-formylamidoimidazole-4-carboxamide ribonucleotide to IMP. This chain is IMP cyclohydrolase, found in Methanococcus maripaludis (strain C7 / ATCC BAA-1331).